The following is a 327-amino-acid chain: Methionyl-tRNA formyltransferase (327 aa).

118-121 (SLLP) lines the (6S)-5,6,7,8-tetrahydrofolate pocket.

This sequence belongs to the Fmt family.

It carries out the reaction L-methionyl-tRNA(fMet) + (6R)-10-formyltetrahydrofolate = N-formyl-L-methionyl-tRNA(fMet) + (6S)-5,6,7,8-tetrahydrofolate + H(+). In terms of biological role, attaches a formyl group to the free amino group of methionyl-tRNA(fMet). The formyl group appears to play a dual role in the initiator identity of N-formylmethionyl-tRNA by promoting its recognition by IF2 and preventing the misappropriation of this tRNA by the elongation apparatus. In Corynebacterium jeikeium (strain K411), this protein is Methionyl-tRNA formyltransferase.